We begin with the raw amino-acid sequence, 311 residues long: HPr kinase/phosphorylase (311 aa).

Active-site residues include histidine 138 and lysine 159. ATP is bound at residue 153 to 160 (GDSGIGKS). Residue serine 160 coordinates Mg(2+). Aspartate 177 acts as the Proton acceptor; for phosphorylation activity. Proton donor; for dephosphorylation activity in catalysis. The segment at 201-210 (LEIRGVGIID) is important for the catalytic mechanism of both phosphorylation and dephosphorylation. Position 202 (glutamate 202) interacts with Mg(2+). Arginine 243 is a catalytic residue. An important for the catalytic mechanism of dephosphorylation region spans residues 264-269 (PVKTGR).

This sequence belongs to the HPrK/P family. In terms of assembly, homohexamer. The cofactor is Mg(2+).

It catalyses the reaction [HPr protein]-L-serine + ATP = [HPr protein]-O-phospho-L-serine + ADP + H(+). It carries out the reaction [HPr protein]-O-phospho-L-serine + phosphate + H(+) = [HPr protein]-L-serine + diphosphate. Catalyzes the ATP- as well as the pyrophosphate-dependent phosphorylation of a specific serine residue in HPr, a phosphocarrier protein of the phosphoenolpyruvate-dependent sugar phosphotransferase system (PTS). HprK/P also catalyzes the pyrophosphate-producing, inorganic phosphate-dependent dephosphorylation (phosphorolysis) of seryl-phosphorylated HPr (P-Ser-HPr). The two antagonistic activities of HprK/P are regulated by several intracellular metabolites, which change their concentration in response to the absence or presence of rapidly metabolisable carbon sources (glucose, fructose, etc.) in the growth medium. Therefore, by controlling the phosphorylation state of HPr, HPrK/P is a sensor enzyme that plays a major role in the regulation of carbon metabolism and sugar transport: it mediates carbon catabolite repression (CCR), and regulates PTS-catalyzed carbohydrate uptake and inducer exclusion. In Streptococcus sanguinis (strain SK36), this protein is HPr kinase/phosphorylase.